We begin with the raw amino-acid sequence, 222 residues long: Large ribosomal subunit protein mL64 (222 aa).

Disordered regions lie at residues 21-47 and 186-222; these read RSRSYRAPPPPRRRPGPHSPDPENLLT and QRKRLKEERQRQKKEARIAAMASAEAQDSAVSGEPSS. The stretch at 98–207 forms a coiled coil; it reads TMQESLRLQQ…KKEARIAAMA (110 aa). Residues 184 to 200 carry the Nuclear localization signal motif; the sequence is KQQRKRLKEERQRQKKE. Residues 186–202 are compositionally biased toward basic and acidic residues; sequence QRKRLKEERQRQKKEAR. The segment covering 203–215 has biased composition (low complexity); sequence IAAMASAEAQDSA.

It belongs to the mitochondrion-specific ribosomal protein mL64 family. As to quaternary structure, component of the mitochondrial ribosome large subunit (39S) which comprises a 16S rRNA and about 50 distinct proteins. Interacts with GADD45A, GADD45B and GADD45G. Interacts with NR4A1 via the NR4A1 AB domain. Interacts with ATAD3A and ATAD3B.

Its subcellular location is the mitochondrion. It is found in the nucleus. Its function is as follows. Acts as a negative regulator of G1 to S cell cycle phase progression by inhibiting cyclin-dependent kinases. Inhibitory effects are additive with GADD45 proteins but also occur in the absence of GADD45 proteins. Acts as a repressor of the orphan nuclear receptor NR4A1 by inhibiting AB domain-mediated transcriptional activity. May be involved in the hormone-mediated regulation of NR4A1 transcriptional activity. May play a role in mitochondrial protein synthesis. This is Large ribosomal subunit protein mL64 (Gadd45gip1) from Mus musculus (Mouse).